Consider the following 266-residue polypeptide: ATG8-interacting protein 2 (266 aa).

The AIM (Atg8-family-interacting motif) signature appears at 14–17; the sequence is WEVV. A helical membrane pass occupies residues 191 to 210; it reads TNTVWSICIAAAVMGIVILG. Residues 218–221 carry the AIM (Atg8-family-interacting motif) motif; the sequence is WQIL.

As to quaternary structure, interacts with ATG8F.

The protein resides in the endoplasmic reticulum membrane. The protein localises to the membrane. May be involved in salt stress-induced vesicle-to-vacuole trafficking pathway. Through its interaction with ATG8F, may enable delivery of the vesicle bodies to the vacuole by an autophagic pathway. Plays a role in seed germination in response to exogenous abscisic acid (ABA) treatment. This is ATG8-interacting protein 2 from Arabidopsis thaliana (Mouse-ear cress).